A 101-amino-acid polypeptide reads, in one-letter code: Small ribosomal subunit protein bS6 (101 aa).

This sequence belongs to the bacterial ribosomal protein bS6 family.

Its function is as follows. Binds together with bS18 to 16S ribosomal RNA. In Staphylococcus saprophyticus subsp. saprophyticus (strain ATCC 15305 / DSM 20229 / NCIMB 8711 / NCTC 7292 / S-41), this protein is Small ribosomal subunit protein bS6.